The following is a 185-amino-acid chain: Transcription termination/antitermination protein NusG (185 aa).

The KOW domain maps to 134-162; that stretch reads PGQMVRVIDGPFNDFDGLVEEVNYEKNRL.

It belongs to the NusG family.

Its function is as follows. Participates in transcription elongation, termination and antitermination. The sequence is that of Transcription termination/antitermination protein NusG from Xylella fastidiosa (strain Temecula1 / ATCC 700964).